A 364-amino-acid polypeptide reads, in one-letter code: D-alanine--D-alanine ligase (364 aa).

The ATP-grasp domain occupies lysine 146–leucine 352. Threonine 179 to glutamate 234 serves as a coordination point for ATP. Aspartate 305, glutamate 319, and asparagine 321 together coordinate Mg(2+).

It belongs to the D-alanine--D-alanine ligase family. It depends on Mg(2+) as a cofactor. Requires Mn(2+) as cofactor.

The protein resides in the cytoplasm. It carries out the reaction 2 D-alanine + ATP = D-alanyl-D-alanine + ADP + phosphate + H(+). The protein operates within cell wall biogenesis; peptidoglycan biosynthesis. Its function is as follows. Cell wall formation. This is D-alanine--D-alanine ligase from Chlorobaculum parvum (strain DSM 263 / NCIMB 8327) (Chlorobium vibrioforme subsp. thiosulfatophilum).